Here is an 81-residue protein sequence, read N- to C-terminus: Putative snRNP Sm-like protein (81 aa).

The Sm domain maps to 13 to 81 (RPLDALGNSL…RGDNIVYISP (69 aa)).

Belongs to the snRNP Sm proteins family.

In Methanothermobacter thermautotrophicus (strain ATCC 29096 / DSM 1053 / JCM 10044 / NBRC 100330 / Delta H) (Methanobacterium thermoautotrophicum), this protein is Putative snRNP Sm-like protein.